The chain runs to 349 residues: Interleukin-10 receptor subunit beta (349 aa).

The first 19 residues, 1–19 (MAPCVAGWLGGFLLVPALG), serve as a signal peptide directing secretion. Over 20 to 220 (MIPPPEKVRM…RTGNDEITPS (201 aa)) the chain is Extracellular. 2 consecutive Fibronectin type-III domains span residues 23–111 (PPEK…VEDT) and 112–215 (IIGP…TGND). The N-linked (GlcNAc...) asparagine glycan is linked to Asn-49. A disulfide bond links Cys-66 and Cys-74. 3 N-linked (GlcNAc...) asparagine glycosylation sites follow: Asn-102, Asn-161, and Asn-199. Cys-188 and Cys-209 are oxidised to a cystine. The chain crosses the membrane as a helical span at residues 221 to 241 (WIVAIILIVSVLVVFLFLLGC). At 242 to 349 (FVVLWLIYKK…PKLLTSTSEV (108 aa)) the chain is on the cytoplasmic side. Ser-299 is subject to Phosphoserine. Residues 300 to 349 (EESEGSKQSPEDNCASEPPSDPGPRELESKDEAPSPPHDDPKLLTSTSEV) form a disordered region. Residues 322 to 341 (GPRELESKDEAPSPPHDDPK) show a composition bias toward basic and acidic residues.

It belongs to the type II cytokine receptor family. Heterodimer with IFNLR1.

Its subcellular location is the membrane. Its function is as follows. Shared cell surface receptor required for the activation of five class 2 cytokines: IL10, IL22, IL26, IL28, and IFNL1. The IFNLR1/IL10RB dimer is a receptor for the cytokine ligands IFNL2 and IFNL3 and mediates their antiviral activity. The ligand/receptor complex stimulate the activation of the JAK/STAT signaling pathway leading to the expression of IFN-stimulated genes (ISG), which contribute to the antiviral state. The polypeptide is Interleukin-10 receptor subunit beta (Il10rb) (Mus musculus (Mouse)).